We begin with the raw amino-acid sequence, 1306 residues long: Kinesin-like protein KIN-14L (1306 aa).

The Kinesin motor domain occupies 142 to 456 (NVKVFCRSRP…LSFSARAKNA (315 aa)). An ATP-binding site is contributed by 223 to 230 (GQSRSGKT). 2 coiled-coil regions span residues 466–507 (IKKW…ANDQ) and 540–595 (HRIE…ALNS). Polar residues-rich tracts occupy residues 592 to 611 (ALNSSDARSTIGSESASVIS) and 660 to 677 (LGSSPQAPSPSNKQTNAQ). 3 disordered regions span residues 592–627 (ALNSSDARSTIGSESASVISTPKMMESTADSSSVTK), 657–710 (KSGL…SGAI), and 849–881 (KSHTSRSRSSSRGSSPGRSPVHHHHDHGSRTSL). Positions 855–867 (SRSSSRGSSPGRS) are enriched in low complexity.

Belongs to the TRAFAC class myosin-kinesin ATPase superfamily. Kinesin family. KIN-14 subfamily.

This chain is Kinesin-like protein KIN-14L, found in Oryza sativa subsp. japonica (Rice).